We begin with the raw amino-acid sequence, 378 residues long: Succinyl-diaminopimelate desuccinylase (378 aa).

His68 is a Zn(2+) binding site. Residue Asp70 is part of the active site. Zn(2+) is bound at residue Asp101. Glu135 serves as the catalytic Proton acceptor. The Zn(2+) site is built by Glu136, Glu164, and His350.

Belongs to the peptidase M20A family. DapE subfamily. As to quaternary structure, homodimer. The cofactor is Zn(2+). Co(2+) is required as a cofactor.

The catalysed reaction is N-succinyl-(2S,6S)-2,6-diaminopimelate + H2O = (2S,6S)-2,6-diaminopimelate + succinate. It participates in amino-acid biosynthesis; L-lysine biosynthesis via DAP pathway; LL-2,6-diaminopimelate from (S)-tetrahydrodipicolinate (succinylase route): step 3/3. Its function is as follows. Catalyzes the hydrolysis of N-succinyl-L,L-diaminopimelic acid (SDAP), forming succinate and LL-2,6-diaminopimelate (DAP), an intermediate involved in the bacterial biosynthesis of lysine and meso-diaminopimelic acid, an essential component of bacterial cell walls. This chain is Succinyl-diaminopimelate desuccinylase, found in Acinetobacter baumannii (strain ATCC 17978 / DSM 105126 / CIP 53.77 / LMG 1025 / NCDC KC755 / 5377).